Reading from the N-terminus, the 156-residue chain is MSKVPSLIEELAKPIVDELNLELVDIEFVKEGRNWFLRVYVDTPEGGIDIDQCAQVSERLSLLLDEKDPITQNYYLEVSSPGAERPLKKDADFEKAIGKFIYVKTYKPIKDMKEFQGYLTSYEEHTLVMEVRIKTRKITVTIEQEKIALARLAIDF.

Belongs to the RimP family.

Its subcellular location is the cytoplasm. Required for maturation of 30S ribosomal subunits. The sequence is that of Ribosome maturation factor RimP from Lysinibacillus sphaericus (strain C3-41).